Reading from the N-terminus, the 227-residue chain is UPF0173 metal-dependent hydrolase BCAH187_A4741 (227 aa).

It belongs to the UPF0173 family.

This is UPF0173 metal-dependent hydrolase BCAH187_A4741 from Bacillus cereus (strain AH187).